The sequence spans 298 residues: ATP phosphoribosyltransferase (298 aa).

The protein belongs to the ATP phosphoribosyltransferase family. Long subfamily. Mg(2+) serves as cofactor.

The protein localises to the cytoplasm. It carries out the reaction 1-(5-phospho-beta-D-ribosyl)-ATP + diphosphate = 5-phospho-alpha-D-ribose 1-diphosphate + ATP. Its pathway is amino-acid biosynthesis; L-histidine biosynthesis; L-histidine from 5-phospho-alpha-D-ribose 1-diphosphate: step 1/9. Feedback inhibited by histidine. Its function is as follows. Catalyzes the condensation of ATP and 5-phosphoribose 1-diphosphate to form N'-(5'-phosphoribosyl)-ATP (PR-ATP). Has a crucial role in the pathway because the rate of histidine biosynthesis seems to be controlled primarily by regulation of HisG enzymatic activity. This chain is ATP phosphoribosyltransferase, found in Vibrio parahaemolyticus serotype O3:K6 (strain RIMD 2210633).